Here is a 494-residue protein sequence, read N- to C-terminus: V-type proton ATPase subunit B (494 aa).

Arg384 contacts ATP.

Belongs to the ATPase alpha/beta chains family. As to quaternary structure, V-ATPase is a heteromultimeric enzyme made up of two complexes: the ATP-hydrolytic V1 complex and the proton translocation V0 complex. The V1 complex consists of three catalytic AB heterodimers that form a heterohexamer, three peripheral stalks each consisting of EG heterodimers, one central rotor including subunits D and F, and the regulatory subunits C and H. The proton translocation complex V0 consists of the proton transport subunit a, a ring of proteolipid subunits c9c'', rotary subunit d, subunits e and f, and the accessory subunits VhaAC45 and ATP6AP2.

Its function is as follows. Non-catalytic subunit of the V1 complex of vacuolar(H+)-ATPase (V-ATPase), a multisubunit enzyme composed of a peripheral complex (V1) that hydrolyzes ATP and a membrane integral complex (V0) that translocates protons. V-ATPase is responsible for acidifying and maintaining the pH of intracellular compartments and in some cell types, is targeted to the plasma membrane, where it is responsible for acidifying the extracellular environment. Essential for the proper assembly and activity of V-ATPase. The polypeptide is V-type proton ATPase subunit B (VHA55) (Heliothis virescens (Tobacco budworm moth)).